The chain runs to 238 residues: Sugar fermentation stimulation protein homolog (238 aa).

It belongs to the SfsA family.

The sequence is that of Sugar fermentation stimulation protein homolog from Shewanella denitrificans (strain OS217 / ATCC BAA-1090 / DSM 15013).